The chain runs to 1020 residues: Vacuolar membrane protease (1020 aa).

Residues 1–11 lie on the Cytoplasmic side of the membrane; it reads MKCHNPFGFRV. Residues 12 to 32 traverse the membrane as a helical segment; that stretch reads GPVTFWTIIIYLALLVPLLWI. At 33–410 the chain is on the vacuolar side; sequence HETVPPAPSS…GFAVFGLRGL (378 aa). 3 N-linked (GlcNAc...) asparagine glycosylation sites follow: Asn-50, Asn-94, and Asn-130. Zn(2+)-binding residues include His-191 and Asp-203. Glu-237 acts as the Proton acceptor in catalysis. Residues Glu-238, Glu-263, and His-336 each coordinate Zn(2+). Residues 411–431 form a helical membrane-spanning segment; it reads FAWSLTLLIVSPLILAILVFI. The Cytoplasmic portion of the chain corresponds to 432–467; that stretch reads LNRHDKLYFFSRKINVHNEGSEDPVSIGGFRGFTRF. The helical transmembrane segment at 468–488 threads the bilayer; it reads PIAVGFSGALTLASAFLLTKI. Residues 489-491 are Vacuolar-facing; the sequence is NPM. The helical transmembrane segment at 492–512 threads the bilayer; sequence IVYSSEYAVWGMMLSLFYVSL. Residues 513–529 lie on the Cytoplasmic side of the membrane; it reads WMTLKGSSAVRPSALQR. Residues 530–550 form a helical membrane-spanning segment; it reads GYIHIWLFIVSWGLLIVVAVT. At 551-561 the chain is on the vacuolar side; it reads EDRLKIASGYP. The chain crosses the membrane as a helical span at residues 562 to 582; sequence VVFLHSALFLSTVISFLELFG. Over 583 to 690 the chain is Cytoplasmic; sequence LTKKHDYARR…RLPGWTWILQ (108 aa). The disordered stretch occupies residues 609–648; the sequence is DDALIAPDTPNDEAEDSDGEDSEHEPTETTPLRAGGDSRV. Residues 618 to 631 are compositionally biased toward acidic residues; sequence PNDEAEDSDGEDSE. The chain crosses the membrane as a helical span at residues 691 to 711; that stretch reads FLLLAPINVILWGQIGLFAVA. Over 712-724 the chain is Vacuolar; it reads ATQAGGADGGSVL. The chain crosses the membrane as a helical span at residues 725-745; that stretch reads TTYLIIAVLSIVILVPLAPFI. The Cytoplasmic portion of the chain corresponds to 746 to 750; it reads HRVHY. The chain crosses the membrane as a helical span at residues 751 to 771; sequence YVPIILFAAFAGTLIYNLIAF. Residues 772–1020 are Vacuolar-facing; that stretch reads PFSANNRYKI…VGLVRPVKRF (249 aa). Asn-851, Asn-868, and Asn-873 each carry an N-linked (GlcNAc...) asparagine glycan.

The protein belongs to the peptidase M28 family. It depends on Zn(2+) as a cofactor.

It is found in the vacuole membrane. May be involved in vacuolar sorting and osmoregulation. This is Vacuolar membrane protease from Verticillium alfalfae (strain VaMs.102 / ATCC MYA-4576 / FGSC 10136) (Verticillium wilt of alfalfa).